A 176-amino-acid chain; its full sequence is Nucleoside triphosphate/diphosphate phosphatase (176 aa).

Catalysis depends on R23, which acts as the Proton donor. N87, D103, D105, D107, D120, and E123 together coordinate Mg(2+).

The protein belongs to the Ntdp family. It depends on Mg(2+) as a cofactor.

The enzyme catalyses a ribonucleoside 5'-triphosphate + H2O = a ribonucleoside 5'-diphosphate + phosphate + H(+). The catalysed reaction is a ribonucleoside 5'-diphosphate + H2O = a ribonucleoside 5'-phosphate + phosphate + H(+). In terms of biological role, has nucleoside phosphatase activity towards nucleoside triphosphates and nucleoside diphosphates. This chain is Nucleoside triphosphate/diphosphate phosphatase (yjjG), found in Lactococcus lactis subsp. lactis (strain IL1403) (Streptococcus lactis).